The primary structure comprises 187 residues: Protein McbG (187 aa).

The protein belongs to the pentapeptide repeat protein family.

In terms of biological role, together with proteins McbE and McbF this protein causes immunity to the peptide antibiotic microcin B17 (MccB17), which inhibits DNA replication in Enterobacteriaceae by induction of the SOS repair system. McbG alone can provide some protection. The polypeptide is Protein McbG (mcbG) (Escherichia coli).